Reading from the N-terminus, the 417-residue chain is Tyrosine--tRNA ligase (417 aa).

Residue Y36 participates in L-tyrosine binding. A 'HIGH' region motif is present at residues 41–50 (PTADSLHIGH). Y170 and Q174 together coordinate L-tyrosine. Residues 231–235 (KFGKS) carry the 'KMSKS' region motif. ATP is bound at residue K234. An S4 RNA-binding domain is found at 351 to 417 (TNLVELLIEA…GKKKYFMIIH (67 aa)).

The protein belongs to the class-I aminoacyl-tRNA synthetase family. TyrS type 1 subfamily. In terms of assembly, homodimer.

Its subcellular location is the cytoplasm. The enzyme catalyses tRNA(Tyr) + L-tyrosine + ATP = L-tyrosyl-tRNA(Tyr) + AMP + diphosphate + H(+). Functionally, catalyzes the attachment of tyrosine to tRNA(Tyr) in a two-step reaction: tyrosine is first activated by ATP to form Tyr-AMP and then transferred to the acceptor end of tRNA(Tyr). This Macrococcus caseolyticus (strain JCSC5402) (Macrococcoides caseolyticum) protein is Tyrosine--tRNA ligase.